We begin with the raw amino-acid sequence, 805 residues long: Leucine--tRNA ligase (805 aa).

The 'HIGH' region signature appears at 40–51 (PYPSGSGLHVGH). A 'KMSKS' region motif is present at residues 576–580 (KMSKS). Lysine 579 serves as a coordination point for ATP.

It belongs to the class-I aminoacyl-tRNA synthetase family.

The protein localises to the cytoplasm. The catalysed reaction is tRNA(Leu) + L-leucine + ATP = L-leucyl-tRNA(Leu) + AMP + diphosphate. This Chlorobium limicola (strain DSM 245 / NBRC 103803 / 6330) protein is Leucine--tRNA ligase.